We begin with the raw amino-acid sequence, 451 residues long: Signal recognition particle 54 kDa protein (451 aa).

GTP is bound by residues 105–112, 187–191, and 247–250; these read GVQGTGKT, DTAGR, and TKMD.

Belongs to the GTP-binding SRP family. SRP54 subfamily. In terms of assembly, part of the signal recognition particle protein translocation system, which is composed of SRP and FtsY. Archaeal SRP consists of a 7S RNA molecule of 300 nucleotides and two protein subunits: SRP54 and SRP19.

Its subcellular location is the cytoplasm. The catalysed reaction is GTP + H2O = GDP + phosphate + H(+). Functionally, involved in targeting and insertion of nascent membrane proteins into the cytoplasmic membrane. Binds to the hydrophobic signal sequence of the ribosome-nascent chain (RNC) as it emerges from the ribosomes. The SRP-RNC complex is then targeted to the cytoplasmic membrane where it interacts with the SRP receptor FtsY. The polypeptide is Signal recognition particle 54 kDa protein (Acidianus ambivalens (Desulfurolobus ambivalens)).